Consider the following 241-residue polypeptide: Sugar fermentation stimulation protein homolog (241 aa).

The protein belongs to the SfsA family.

The protein is Sugar fermentation stimulation protein homolog of Yersinia enterocolitica serotype O:8 / biotype 1B (strain NCTC 13174 / 8081).